A 264-amino-acid chain; its full sequence is Alkaline ceramidase 1 (264 aa).

At 1-27 (MPSIFAYQSSEVDWCESNFQYSELVAE) the chain is on the lumenal side. 5 residues coordinate Ca(2+): Asp13, Trp14, Glu16, Asn18, and Glu27. The helical transmembrane segment at 28–48 (FYNTFSNIPFFIFGPLMMLLM) threads the bilayer. The Cytoplasmic segment spans residues 49–57 (HPYAQKRSR). Residues 58–78 (YIYVVWVLFMIIGLFSMYFHM) form a helical membrane-spanning segment. His77 serves as a coordination point for Zn(2+). Topologically, residues 79–81 (TLS) are lumenal. The helical transmembrane segment at 82-102 (FLGQLLDEIAILWLLGSGYSI) threads the bilayer. Topologically, residues 103-119 (WMPRCYFPSFLGGNRSQ) are cytoplasmic. The chain crosses the membrane as a helical span at residues 120–137 (FIRLVFITTVVSTLLSFL). Arg138 is a topological domain (lumenal). Residues 139–159 (PTVNAYALNSIALHILYIVCQ) form a helical membrane-spanning segment. Residues 160 to 176 (EYRKTSNKELRHLIEVS) lie on the Cytoplasmic side of the membrane. The chain crosses the membrane as a helical span at residues 177–197 (VVLWAVALTSWISDRLLCSFW). Over 198–206 (QRIHFFYLH) the chain is Lumenal. 2 residues coordinate Zn(2+): His206 and His210. The chain crosses the membrane as a helical span at residues 207 to 227 (SIWHVLISITFPYGMVTMALV). Residues 228–264 (DANYEMPGETLKVRYWPRDSWPVGLPYVEIRGDDKDC) are Cytoplasmic-facing.

Belongs to the alkaline ceramidase family. Zn(2+) serves as cofactor. Mainly expressed in epidermis.

It is found in the endoplasmic reticulum membrane. The enzyme catalyses an N-acylsphing-4-enine + H2O = sphing-4-enine + a fatty acid. It catalyses the reaction N-tetracosanoyl-sphing-4-enine + H2O = tetracosanoate + sphing-4-enine. It carries out the reaction an N-acylsphinganine + H2O = sphinganine + a fatty acid. The catalysed reaction is N-(9Z-octadecenoyl)-sphing-4-enine + H2O = sphing-4-enine + (9Z)-octadecenoate. The enzyme catalyses N-(15Z-tetracosenoyl)-sphing-4-enine + H2O = (15Z)-tetracosenoate + sphing-4-enine. Its pathway is lipid metabolism; sphingolipid metabolism. Inhibited by sphingosine. Activity is Ca(2+)-dependent. Its function is as follows. Endoplasmic reticulum ceramidase that catalyzes the hydrolysis of ceramides into sphingosine and free fatty acids at alkaline pH. Ceramides, sphingosine, and its phosphorylated form sphingosine-1-phosphate are bioactive lipids that mediate cellular signaling pathways regulating several biological processes including cell proliferation, apoptosis and differentiation. Exhibits a strong substrate specificity towards the natural stereoisomer of ceramides with D-erythro-sphingosine as a backbone and has a higher activity towards very long-chain unsaturated fatty acids like the C24:1-ceramide. May also hydrolyze dihydroceramides to produce dihydrosphingosine. ACER1 is a skin-specific ceramidase that regulates the levels of ceramides, sphingosine and sphingosine-1-phosphate in the epidermis, mediates the calcium-induced differentiation of epidermal keratinocytes and more generally plays an important role in skin homeostasis. The chain is Alkaline ceramidase 1 from Homo sapiens (Human).